Here is a 270-residue protein sequence, read N- to C-terminus: Calpain small subunit 1 (270 aa).

Methionine 1 carries the post-translational modification N-acetylmethionine. Position 6 is a phosphoserine (serine 6). The EF-hand 1; atypical domain occupies 98-132; it reads EEERQFRKLFVQLAGDDMEVSATELMNILNKVVTR. Ca(2+) contacts are provided by alanine 111, aspartate 114, glutamate 116, glutamate 121, aspartate 139, aspartate 154, aspartate 156, threonine 158, lysine 160, and glutamate 165. EF-hand domains are found at residues 141–174, 171–206, 207–235, and 236–270; these read FGIDTCRSMVAVMDSDTTGKLGFEEFKYLWNNIK, NNIKKWQGIYKRFDTDRSGTIGSNELPGAFEAAGFH, LNQHIYSMIIRRYSDETGNMDFDNFISCL, and VRLDAMFRAFRSLDKNGTGQIQVNIQEWLQLTMYS. The residue at position 181 (lysine 181) is an N6-acetyllysine. Ca(2+)-binding residues include aspartate 184, aspartate 186, serine 188, threonine 190, glutamate 195, and aspartate 227.

In terms of assembly, homodimer or heterodimer of a large (catalytic) and a small (regulatory) subunit. In presence of calcium, the heterodimer dissociates.

The protein localises to the cytoplasm. It is found in the cell membrane. In terms of biological role, regulatory subunit of the calcium-regulated non-lysosomal thiol-protease which catalyzes limited proteolysis of substrates involved in cytoskeletal remodeling and signal transduction. Essential for embryonic development. The chain is Calpain small subunit 1 (Capns1) from Rattus norvegicus (Rat).